The following is a 423-amino-acid chain: Histidine--tRNA ligase (423 aa).

It belongs to the class-II aminoacyl-tRNA synthetase family. In terms of assembly, homodimer.

Its subcellular location is the cytoplasm. The enzyme catalyses tRNA(His) + L-histidine + ATP = L-histidyl-tRNA(His) + AMP + diphosphate + H(+). This Rhodococcus jostii (strain RHA1) protein is Histidine--tRNA ligase.